A 216-amino-acid chain; its full sequence is Thymidylate kinase (216 aa).

10-17 (GIDGCGKT) contacts ATP.

It belongs to the thymidylate kinase family.

It carries out the reaction dTMP + ATP = dTDP + ADP. Its function is as follows. Phosphorylation of dTMP to form dTDP in both de novo and salvage pathways of dTTP synthesis. This is Thymidylate kinase from Prochlorococcus marinus (strain MIT 9303).